A 358-amino-acid polypeptide reads, in one-letter code: Putative ankyrin repeat protein FPV242 (358 aa).

ANK repeat units lie at residues 6–35, 40–69, 91–118, 119–147, 149–177, 180–209, 214–243, 248–277, 280–312, and 316–345; these read NNYRKLRKAIINEDIEEIKYIIEKDPNMIV, NNHTLLHIAIMYRKVNAVKVLLDKGDNLVY, TRRNKISNALEKINNHKKIIEALVDKGV, ELTGLEIALSCKNIWLIKFLIEKGISVEY, GFFPVGVNYNTIDIDICKVLLENKIDINK, CGETLVRYAIRSSDLNLLKYLISKGADIEK, EQDPNIIEAVEKGNLGIVEYLIDNGISIDT, NHKPAIYYAILAGHYNMVDLLLRRGANPFI, EGNTSLISVATQAKRNRLKLINLLLKYGVRLPG, and YYIQPILLDYSYETYNIIHILLEHGLRITS.

The chain is Putative ankyrin repeat protein FPV242 from Fowlpox virus (strain NVSL) (FPV).